A 1374-amino-acid polypeptide reads, in one-letter code: DNA-directed RNA polymerase subunit beta (1374 aa).

Belongs to the RNA polymerase beta chain family. As to quaternary structure, the RNAP catalytic core consists of 2 alpha, 1 beta, 1 beta' and 1 omega subunit. When a sigma factor is associated with the core the holoenzyme is formed, which can initiate transcription.

It carries out the reaction RNA(n) + a ribonucleoside 5'-triphosphate = RNA(n+1) + diphosphate. DNA-dependent RNA polymerase catalyzes the transcription of DNA into RNA using the four ribonucleoside triphosphates as substrates. This chain is DNA-directed RNA polymerase subunit beta, found in Methylobacterium radiotolerans (strain ATCC 27329 / DSM 1819 / JCM 2831 / NBRC 15690 / NCIMB 10815 / 0-1).